We begin with the raw amino-acid sequence, 472 residues long: Cysteine--tRNA ligase (472 aa).

A Zn(2+)-binding site is contributed by Cys-29. A 'HIGH' region motif is present at residues 31–41 (PTVYNYIHIGN). Zn(2+) contacts are provided by Cys-214, His-239, and Glu-243. Residues 273 to 277 (KMSKS) carry the 'KMSKS' region motif. Lys-276 lines the ATP pocket.

This sequence belongs to the class-I aminoacyl-tRNA synthetase family. Monomer. Zn(2+) serves as cofactor.

It is found in the cytoplasm. The catalysed reaction is tRNA(Cys) + L-cysteine + ATP = L-cysteinyl-tRNA(Cys) + AMP + diphosphate. This Lactobacillus gasseri (strain ATCC 33323 / DSM 20243 / BCRC 14619 / CIP 102991 / JCM 1131 / KCTC 3163 / NCIMB 11718 / NCTC 13722 / AM63) protein is Cysteine--tRNA ligase.